Reading from the N-terminus, the 287-residue chain is ATP synthase gamma chain (287 aa).

It belongs to the ATPase gamma chain family. As to quaternary structure, F-type ATPases have 2 components, CF(1) - the catalytic core - and CF(0) - the membrane proton channel. CF(1) has five subunits: alpha(3), beta(3), gamma(1), delta(1), epsilon(1). CF(0) has three main subunits: a, b and c.

It is found in the cell inner membrane. Produces ATP from ADP in the presence of a proton gradient across the membrane. The gamma chain is believed to be important in regulating ATPase activity and the flow of protons through the CF(0) complex. The polypeptide is ATP synthase gamma chain (Cronobacter sakazakii (strain ATCC BAA-894) (Enterobacter sakazakii)).